The chain runs to 566 residues: Endoglucanase B (566 aa).

The signal sequence occupies residues 1–30; sequence MKKRRSSKVILSLAIVVALLAAVEPNAALA. Glu-177 (proton donor) is an active-site residue. Catalysis depends on Glu-299, which acts as the Nucleophile.

The protein belongs to the glycosyl hydrolase 5 (cellulase A) family.

The catalysed reaction is Endohydrolysis of (1-&gt;4)-beta-D-glucosidic linkages in cellulose, lichenin and cereal beta-D-glucans.. The chain is Endoglucanase B (celB) from Paenibacillus lautus (Bacillus lautus).